A 321-amino-acid chain; its full sequence is Isopenicillin N synthase (321 aa).

The tract at residues 1 to 42 (MPVLMPSADVPTIDISPQLFGTDPTPRRTSRGRSTRPARGSG) is disordered. The isopenicillin N site is built by arginine 87, tyrosine 91, and tyrosine 188. Positions 87, 91, 188, 213, and 215 each coordinate N-[(5S)-5-amino-5-carboxypentanoyl]-L-cysteinyl-D-valine. The 109-residue stretch at 179–287 (TLSAVSMIRY…RLSLPFFLHA (109 aa)) folds into the Fe2OG dioxygenase domain. 3 residues coordinate Fe(2+): histidine 213, aspartate 215, and histidine 269. Arginine 278 serves as a coordination point for 2-oxoglutarate. Serine 280 provides a ligand contact to isopenicillin N. Serine 280 lines the N-[(5S)-5-amino-5-carboxypentanoyl]-L-cysteinyl-D-valine pocket.

Belongs to the iron/ascorbate-dependent oxidoreductase family. The cofactor is Fe cation. L-ascorbate serves as cofactor.

The enzyme catalyses N-[(5S)-5-amino-5-carboxypentanoyl]-L-cysteinyl-D-valine + O2 = isopenicillin N + 2 H2O. Its pathway is antibiotic biosynthesis; penicillin G biosynthesis; penicillin G from L-alpha-aminoadipate and L-cysteine and L-valine: step 2/3. Removes, in the presence of oxygen, 4 hydrogen atoms from delta-L-(alpha-aminoadipyl)-L-cysteinyl-D-valine (ACV) to form the azetidinone and thiazolidine rings of isopenicillin. The sequence is that of Isopenicillin N synthase (pcbC) from Streptantibioticus cattleyicolor (Streptomyces cattleya).